The sequence spans 291 residues: Tetrahydromethanopterin:alpha-L-glutamate ligase (291 aa).

The ATP-grasp domain maps to Ser101 to Ile286. ATP contacts are provided by residues Lys136, Gln175–Asp187, and Arg203. Mg(2+) is bound by residues Asp247, Glu259, and Asn261. Mn(2+) is bound by residues Asp247, Glu259, and Asn261.

This sequence belongs to the RimK family. MptN subfamily. As to quaternary structure, homodimer. Requires Mg(2+) as cofactor. Mn(2+) is required as a cofactor.

The catalysed reaction is 5,6,7,8-tetrahydromethanopterin + L-glutamate + ATP = 5,6,7,8-tetrahydrosarcinapterin + ADP + phosphate + H(+). It participates in cofactor biosynthesis; 5,6,7,8-tetrahydrosarcinapterin biosynthesis. Its function is as follows. Catalyzes the ATP or GTP-dependent addition of one L-glutamate molecule to tetrahydromethanopterin, producing tetrahydrosarcinapterin. This Methanocaldococcus jannaschii (strain ATCC 43067 / DSM 2661 / JAL-1 / JCM 10045 / NBRC 100440) (Methanococcus jannaschii) protein is Tetrahydromethanopterin:alpha-L-glutamate ligase (mptN).